Consider the following 560-residue polypeptide: Probable sulfate transporter MT1781 (560 aa).

11 helical membrane passes run 29–49, 51–71, 79–99, 105–125, 138–158, 184–204, 207–227, 256–276, 333–353, 355–375, and 394–414; these read VLAG…YATV, GLPP…YALL, IGPE…MAAG, AVLA…AGTA, VLVG…LGTI, WPTF…TRWA, APGP…MSLD, ALII…VLTA, LIAL…LAMF, IAAL…LSEF, and AAVL…LSIL. The 116-residue stretch at 442–557 folds into the STAS domain; the sequence is DYPQAKRVPG…MTLPTAVQAF (116 aa).

The protein belongs to the SLC26A/SulP transporter (TC 2.A.53) family.

The protein resides in the cell membrane. The chain is Probable sulfate transporter MT1781 from Mycobacterium tuberculosis (strain CDC 1551 / Oshkosh).